Reading from the N-terminus, the 44-residue chain is Large ribosomal subunit protein bL34 (44 aa).

Belongs to the bacterial ribosomal protein bL34 family.

In Neorickettsia sennetsu (strain ATCC VR-367 / Miyayama) (Ehrlichia sennetsu), this protein is Large ribosomal subunit protein bL34.